The sequence spans 199 residues: Imidazoleglycerol-phosphate dehydratase (199 aa).

The protein belongs to the imidazoleglycerol-phosphate dehydratase family.

It localises to the cytoplasm. It carries out the reaction D-erythro-1-(imidazol-4-yl)glycerol 3-phosphate = 3-(imidazol-4-yl)-2-oxopropyl phosphate + H2O. It functions in the pathway amino-acid biosynthesis; L-histidine biosynthesis; L-histidine from 5-phospho-alpha-D-ribose 1-diphosphate: step 6/9. The chain is Imidazoleglycerol-phosphate dehydratase from Bifidobacterium longum (strain NCC 2705).